The following is a 207-amino-acid chain: dITP/XTP pyrophosphatase (207 aa).

7-12 (SNNAKK) is a substrate binding site. D72 (proton acceptor) is an active-site residue. A Mg(2+)-binding site is contributed by D72. Substrate is bound by residues S73, 155 to 158 (FGYD), K184, and 189 to 190 (HR).

The protein belongs to the HAM1 NTPase family. In terms of assembly, homodimer. Mg(2+) is required as a cofactor.

The catalysed reaction is XTP + H2O = XMP + diphosphate + H(+). The enzyme catalyses dITP + H2O = dIMP + diphosphate + H(+). It carries out the reaction ITP + H2O = IMP + diphosphate + H(+). In terms of biological role, pyrophosphatase that catalyzes the hydrolysis of nucleoside triphosphates to their monophosphate derivatives, with a high preference for the non-canonical purine nucleotides XTP (xanthosine triphosphate), dITP (deoxyinosine triphosphate) and ITP. Seems to function as a house-cleaning enzyme that removes non-canonical purine nucleotides from the nucleotide pool, thus preventing their incorporation into DNA/RNA and avoiding chromosomal lesions. This Corynebacterium efficiens (strain DSM 44549 / YS-314 / AJ 12310 / JCM 11189 / NBRC 100395) protein is dITP/XTP pyrophosphatase.